Here is a 158-residue protein sequence, read N- to C-terminus: Cyclic pyranopterin monophosphate synthase (158 aa).

Residues 75 to 77 and 113 to 114 contribute to the substrate site; these read LCH and ME. Residue Asp-128 is part of the active site.

The protein belongs to the MoaC family. In terms of assembly, homohexamer; trimer of dimers.

It carries out the reaction (8S)-3',8-cyclo-7,8-dihydroguanosine 5'-triphosphate = cyclic pyranopterin phosphate + diphosphate. The protein operates within cofactor biosynthesis; molybdopterin biosynthesis. Functionally, catalyzes the conversion of (8S)-3',8-cyclo-7,8-dihydroguanosine 5'-triphosphate to cyclic pyranopterin monophosphate (cPMP). The sequence is that of Cyclic pyranopterin monophosphate synthase from Ralstonia nicotianae (strain ATCC BAA-1114 / GMI1000) (Ralstonia solanacearum).